A 159-amino-acid polypeptide reads, in one-letter code: CASP-like protein 5C1 (159 aa).

Residues 1 to 6 lie on the Cytoplasmic side of the membrane; it reads MDNGDR. Residues 7-29 form a helical membrane-spanning segment; it reads SGAGAGAVGSAGSLGLRVGQAVF. Residues 30–48 are Extracellular-facing; sequence SSASLLFMSVGVEFFSYTA. The chain crosses the membrane as a helical span at residues 49–69; that stretch reads FCFLVTIMGLVIPWSCTLAMI. Residues 70 to 94 are Cytoplasmic-facing; the sequence is DVYSVFVGCPLRVPGVMVIVVVGDC. Residues 95–117 form a helical membrane-spanning segment; it reads ALSIVSFAAACSSAAVIDLLLQL. The Extracellular portion of the chain corresponds to 118–134; sequence HGSHSSPTFCGRYQLSA. The chain crosses the membrane as a helical span at residues 135–155; the sequence is MMAFLSWLLMAASATFNLWFV. At 156 to 159 the chain is on the cytoplasmic side; the sequence is ASRW.

It belongs to the Casparian strip membrane proteins (CASP) family. As to quaternary structure, homodimer and heterodimers.

Its subcellular location is the cell membrane. This chain is CASP-like protein 5C1, found in Zea mays (Maize).